The sequence spans 803 residues: Volume-regulated anion channel subunit LRRC8B (803 aa).

At 1–25 the chain is on the cytoplasmic side; sequence MITLTELKCLADAQSSYHILKPWWD. The chain crosses the membrane as a helical span at residues 26–46; it reads VFWYYITLIMLLVAVLAGALQ. Residues 47–119 lie on the Extracellular side of the membrane; sequence LTQSRVLCCL…YEKQLHWFAK (73 aa). 2 disulfides stabilise this stretch: C55-C304 and C109-C289. N78 carries an N-linked (GlcNAc...) asparagine glycan. Residues 120 to 140 form a helical membrane-spanning segment; it reads FFPYLVLLHTLIFAACSNFWL. Over 141–261 the chain is Cytoplasmic; sequence HYPSTSSRLE…DIIYRVYLKQ (121 aa). Phosphoserine occurs at positions 186 and 196. The chain crosses the membrane as a helical span at residues 262–282; the sequence is IIVKVILFVLIITYVPYFLSY. Topologically, residues 283–307 are extracellular; sequence ITLEIDCSIDVQAFTGYKRYQCVYS. A helical membrane pass occupies residues 308-328; the sequence is LAEIFKVLASFYVILVMLYGL. At 329 to 803 the chain is on the cytoplasmic side; the sequence is TSSYSLWWML…ERLQTCLDKC (475 aa). 15 LRR repeats span residues 415 to 439, 440 to 462, 464 to 486, 488 to 509, 511 to 532, 539 to 559, 562 to 582, 586 to 607, 609 to 630, 634 to 655, 657 to 678, 680 to 701, 703 to 724, 726 to 747, and 749 to 771; these read VKNS…VFEL, TEME…VAQL, NLRE…AFLE, NLRI…VFHL, NLKE…LHLE, NLRT…VTDL, SLQK…NNLK, NLKS…IFSL, NLHE…ISFQ, SLSC…IGAL, NLEQ…LFLC, KLHY…IQYL, NLQY…LFQC, KLQC…VGEL, and NLTH…EGCQ.

The protein belongs to the LRRC8 family. In terms of assembly, heterohexamer; oligomerizes with other LRRC8 proteins (LRRC8A, LRRC8C, LRRC8D and/or LRRC8E) to form a heterohexamer. In vivo, the subunit composition may depend primarily on expression levels, and heterooligomeric channels containing various proportions of the different LRRC8 proteins may coexist.

Its subcellular location is the cell membrane. It is found in the endoplasmic reticulum membrane. The catalysed reaction is chloride(in) = chloride(out). The enzyme catalyses iodide(out) = iodide(in). It carries out the reaction taurine(out) = taurine(in). Functionally, non-essential component of the volume-regulated anion channel (VRAC, also named VSOAC channel), an anion channel required to maintain a constant cell volume in response to extracellular or intracellular osmotic changes. The VRAC channel conducts iodide better than chloride and can also conduct organic osmolytes like taurine. Channel activity requires LRRC8A plus at least one other family member (LRRC8B, LRRC8C, LRRC8D or LRRC8E); channel characteristics depend on the precise subunit composition. The chain is Volume-regulated anion channel subunit LRRC8B from Mus musculus (Mouse).